Reading from the N-terminus, the 554-residue chain is Chaperonin GroEL (554 aa).

ATP-binding positions include 30-33 (TLGP), K51, 87-91 (DGTTT), G415, 479-481 (NAA), and D495.

It belongs to the chaperonin (HSP60) family. As to quaternary structure, forms a cylinder of 14 subunits composed of two heptameric rings stacked back-to-back. Interacts with the co-chaperonin GroES.

The protein resides in the cytoplasm. It carries out the reaction ATP + H2O + a folded polypeptide = ADP + phosphate + an unfolded polypeptide.. Functionally, together with its co-chaperonin GroES, plays an essential role in assisting protein folding. The GroEL-GroES system forms a nano-cage that allows encapsulation of the non-native substrate proteins and provides a physical environment optimized to promote and accelerate protein folding. This chain is Chaperonin GroEL, found in Nitrosococcus oceani (strain ATCC 19707 / BCRC 17464 / JCM 30415 / NCIMB 11848 / C-107).